The primary structure comprises 299 residues: ATP phosphoribosyltransferase (299 aa).

The protein belongs to the ATP phosphoribosyltransferase family. Long subfamily. Equilibrium between an active dimeric form, an inactive hexameric form and higher aggregates. Interconversion between the various forms is largely reversible and is influenced by the natural substrates and inhibitors of the enzyme. Mg(2+) is required as a cofactor.

It is found in the cytoplasm. It catalyses the reaction 1-(5-phospho-beta-D-ribosyl)-ATP + diphosphate = 5-phospho-alpha-D-ribose 1-diphosphate + ATP. The protein operates within amino-acid biosynthesis; L-histidine biosynthesis; L-histidine from 5-phospho-alpha-D-ribose 1-diphosphate: step 1/9. Feedback inhibited by histidine. Functionally, catalyzes the condensation of ATP and 5-phosphoribose 1-diphosphate to form N'-(5'-phosphoribosyl)-ATP (PR-ATP). Has a crucial role in the pathway because the rate of histidine biosynthesis seems to be controlled primarily by regulation of HisG enzymatic activity. The protein is ATP phosphoribosyltransferase of Pectobacterium carotovorum subsp. carotovorum (strain PC1).